Reading from the N-terminus, the 557-residue chain is 2-succinyl-5-enolpyruvyl-6-hydroxy-3-cyclohexene-1-carboxylate synthase (557 aa).

This sequence belongs to the TPP enzyme family. MenD subfamily. Homodimer. It depends on Mg(2+) as a cofactor. Requires Mn(2+) as cofactor. Thiamine diphosphate serves as cofactor.

The enzyme catalyses isochorismate + 2-oxoglutarate + H(+) = 5-enolpyruvoyl-6-hydroxy-2-succinyl-cyclohex-3-ene-1-carboxylate + CO2. Its pathway is quinol/quinone metabolism; 1,4-dihydroxy-2-naphthoate biosynthesis; 1,4-dihydroxy-2-naphthoate from chorismate: step 2/7. It functions in the pathway quinol/quinone metabolism; menaquinone biosynthesis. Functionally, catalyzes the thiamine diphosphate-dependent decarboxylation of 2-oxoglutarate and the subsequent addition of the resulting succinic semialdehyde-thiamine pyrophosphate anion to isochorismate to yield 2-succinyl-5-enolpyruvyl-6-hydroxy-3-cyclohexene-1-carboxylate (SEPHCHC). This Phocaeicola vulgatus (strain ATCC 8482 / DSM 1447 / JCM 5826 / CCUG 4940 / NBRC 14291 / NCTC 11154) (Bacteroides vulgatus) protein is 2-succinyl-5-enolpyruvyl-6-hydroxy-3-cyclohexene-1-carboxylate synthase.